The following is a 368-amino-acid chain: H-2 class I histocompatibility antigen, K-D alpha chain (368 aa).

An N-terminal signal peptide occupies residues 1–21 (MAPCTLLLLLAAALAPTQTRA). The tract at residues 22-111 (GPHSLRYFVT…AQRYYNQSKG (90 aa)) is alpha-1. At 22 to 305 (GPHSLRYFVT…KLPPSTVSNT (284 aa)) the chain is on the extracellular side. N107 carries an N-linked (GlcNAc...) asparagine glycan. The segment at 112 to 203 (GSHTFQRMFG…ELGNETLLRT (92 aa)) is alpha-2. A disulfide bridge connects residues C122 and C185. N-linked (GlcNAc...) asparagine glycosylation is found at N197 and N277. Residues 204–295 (DSPKAHVTYH…GLPEPLTLRW (92 aa)) form an alpha-3 region. The 89-residue stretch at 206-294 (PKAHVTYHPR…KGLPEPLTLR (89 aa)) folds into the Ig-like C1-type domain. A disulfide bridge connects residues C224 and C280. The tract at residues 296–305 (KLPPSTVSNT) is connecting peptide. A helical transmembrane segment spans residues 306–328 (VIIAVLVVLGAAIVTGAVVAFVM). Residues 329–368 (KMRRNTGGKGVNYALAPGSQTSDLSLPDGKVMVHDPHSLA) are Cytoplasmic-facing. S350 and S353 each carry phosphoserine.

It belongs to the MHC class I family. Heterodimer of an alpha chain and a beta chain (beta-2-microglobulin).

It localises to the membrane. Functionally, involved in the presentation of foreign antigens to the immune system. This Mus musculus (Mouse) protein is H-2 class I histocompatibility antigen, K-D alpha chain (H2-K1).